A 209-amino-acid chain; its full sequence is Large ribosomal subunit protein uL3 (209 aa).

Gln-150 is modified (N5-methylglutamine).

It belongs to the universal ribosomal protein uL3 family. As to quaternary structure, part of the 50S ribosomal subunit. Forms a cluster with proteins L14 and L19. Methylated by PrmB.

Its function is as follows. One of the primary rRNA binding proteins, it binds directly near the 3'-end of the 23S rRNA, where it nucleates assembly of the 50S subunit. The sequence is that of Large ribosomal subunit protein uL3 from Salmonella arizonae (strain ATCC BAA-731 / CDC346-86 / RSK2980).